Consider the following 355-residue polypeptide: Uroporphyrinogen decarboxylase (355 aa).

Residues 27-31, Asp-78, Tyr-155, Thr-210, and His-328 contribute to the substrate site; that span reads RQAGR.

Belongs to the uroporphyrinogen decarboxylase family. As to quaternary structure, homodimer.

Its subcellular location is the cytoplasm. It carries out the reaction uroporphyrinogen III + 4 H(+) = coproporphyrinogen III + 4 CO2. It functions in the pathway porphyrin-containing compound metabolism; protoporphyrin-IX biosynthesis; coproporphyrinogen-III from 5-aminolevulinate: step 4/4. Catalyzes the decarboxylation of four acetate groups of uroporphyrinogen-III to yield coproporphyrinogen-III. This Pseudomonas fluorescens (strain SBW25) protein is Uroporphyrinogen decarboxylase.